The following is a 976-amino-acid chain: Metabotropic glutamate receptor (976 aa).

A signal peptide spans 1–25 (MKQKNNNGTILVVVMVLSWSRVVDL). Residues 26–626 (KSPSNTHTQD…IQYMKWNSLF (601 aa)) are Extracellular-facing. Asn-112 and Asn-143 each carry an N-linked (GlcNAc...) asparagine glycan. L-glutamate contacts are provided by residues Ser-158 and 179-181 (AST). The N-linked (GlcNAc...) asparagine glycan is linked to Asn-216. Tyr-229 serves as a coordination point for L-glutamate. Asn-299 is a glycosylation site (N-linked (GlcNAc...) asparagine). Asp-310 contacts L-glutamate. Asn-386 carries an N-linked (GlcNAc...) asparagine glycan. L-glutamate is bound at residue Lys-417. 2 N-linked (GlcNAc...) asparagine glycosylation sites follow: Asn-491 and Asn-524. The helical transmembrane segment at 627–649 (ALIPMAIAIFGIALTSIVIVLFA) threads the bilayer. Residues 650-663 (KNHDTPLVRASGRE) lie on the Cytoplasmic side of the membrane. Residues 664–684 (LSYTLLFGILVCYCNTFALIA) traverse the membrane as a helical segment. Residues 685-695 (KPTIGSCVLQR) lie on the Extracellular side of the membrane. A helical transmembrane segment spans residues 696–714 (FGIGVGFSIIYSALLTKTN). At 715 to 738 (RISRIFHSASKSAQRLKYISPQSQ) the chain is on the cytoplasmic side. Residues 739–759 (VVITTSLIAIQVLITMIWMVV) traverse the membrane as a helical segment. At 760–782 (EPPGTRFYYPDRREVILKCKIQD) the chain is on the extracellular side. The helical transmembrane segment at 783 to 804 (MSFLFSQLYNMILITICTIYAI) threads the bilayer. Over 805–817 (KTRKIPENFNESK) the chain is Cytoplasmic. The chain crosses the membrane as a helical span at residues 818 to 840 (FIGFTMYTTCIIWLAFVPIYFGT). At 841-850 (GNSYEVQTTT) the chain is on the extracellular side. The helical transmembrane segment at 851 to 876 (LCISISLSASVALVCLYSPKVYILVF) threads the bilayer. At 877–976 (HPDKNVRKLT…VEPICHIVNK (100 aa)) the chain is on the cytoplasmic side. A disordered region spans residues 920 to 946 (LTGGAVGTNASSSTLPTQNSPHLDEAS). Polar residues predominate over residues 927–946 (TNASSSTLPTQNSPHLDEAS).

The protein belongs to the G-protein coupled receptor 3 family. Expressed in the neurons of the larval CNS from the beginning of the first until the third instar. Expression in the third-instar larval CNS is restricted to a discrete number of somas and projections in the brain lobes and in the ventral ganglion. In the ventral nerve cord, expression is detected both in somas and projections. Expressed in the antennal lobes, the optic lobes, the central complex and the median bundle in the adult CNS.

The protein localises to the cell membrane. Its function is as follows. G-protein coupled receptor for glutamate. Ligand binding causes a conformation change that triggers signaling via guanine nucleotide-binding proteins (G proteins) and modulates the activity of down-stream effectors. This Drosophila melanogaster (Fruit fly) protein is Metabotropic glutamate receptor (mGluR).